The chain runs to 164 residues: Endoribonuclease YbeY (164 aa).

Residues histidine 117, histidine 121, and histidine 127 each contribute to the Zn(2+) site.

It belongs to the endoribonuclease YbeY family. The cofactor is Zn(2+).

It localises to the cytoplasm. Functionally, single strand-specific metallo-endoribonuclease involved in late-stage 70S ribosome quality control and in maturation of the 3' terminus of the 16S rRNA. The chain is Endoribonuclease YbeY from Mycoplasma mycoides subsp. mycoides SC (strain CCUG 32753 / NCTC 10114 / PG1).